A 326-amino-acid chain; its full sequence is ELAV-like protein 1 (326 aa).

Residue S2 is modified to N-acetylserine. Position 2 is a phosphoserine (S2). Residues 20–98 (TNLIVNYLPQ…KTIKVSYARP (79 aa)) form the RRM 1 domain. A phosphoserine mark is found at S100 and S158. The region spanning 106–186 (ANLYISGLPR…EPITVKFAAN (81 aa)) is the RRM 2 domain. A Glycyl lysine isopeptide (Lys-Gly) (interchain with G-Cter in SUMO2) cross-link involves residue K191. A phosphoserine mark is found at S197 and S202. R206 is modified (omega-N-methylarginine). Residue R217 is modified to Asymmetric dimethylarginine; by CARM1; alternate. Omega-N-methylarginine; alternate is present on R217. S221 and S318 each carry phosphoserine. Positions 244–322 (WCIFIYNLGQ…KILQVSFKTN (79 aa)) constitute an RRM 3 domain.

It belongs to the RRM elav family. In terms of assembly, monomer and homodimer (in vitro). Interacts with ANP32A. Interacts with ZNF385A; the interaction is indirect and mRNA-dependent and may regulate p53/TP53 expression. Identified in a mRNP complex, at least composed of DHX9, DDX3X, ELAVL1, HNRNPU, IGF2BP1, ILF3, PABPC1, PCBP2, PTBP2, STAU1, STAU2, SYNCRIP and YBX1. Interacts with AGO1 and AGO2. Interacts with IGF2BP1; the interaction is enhanced by SEPIN14P20 peptide RBPR. Interacts with IGF2BP2 and IGF2BP3. Interacts with HNRNPL. Interacts with DHX36; this interaction occurs in a RNA-dependent manner. Interacts with ILF3; this interaction occurs in a RNA-dependent manner. Interacts with PLEKHN1. Interacts with SHFL; the interaction increases in presence of RNA. Interacts with YBX1; interaction recruits ELAVL1 on C5-methylcytosine (m5C)-containing mRNAs, thereby promoting mRNA stability. Interacts with FXR1. Phosphorylated by MAPKAPK2. Phosphorylated by PRKCD. In terms of processing, methylated at Arg-217 by CARM1 in macrophages in response to LPS challenge. In terms of tissue distribution, ubiquitous. Detected in brain, liver, thymus and muscle.

It localises to the cytoplasm. It is found in the nucleus. The protein resides in the stress granule. The protein localises to the P-body. RNA-binding protein that binds to the 3'-UTR region of mRNAs and increases their stability. Involved in embryonic stem cell (ESC) differentiation: preferentially binds mRNAs that are not methylated by N6-methyladenosine (m6A), stabilizing them, promoting ESC differentiation. Has also been shown to be capable of binding to m6A-containing mRNAs and contributes to MYC stability by binding to m6A-containing MYC mRNAs. Binds to poly-U elements and AU-rich elements (AREs) in the 3'-UTR of target mRNAs. Binds avidly to the AU-rich element in FOS and IL3/interleukin-3 mRNAs. In the case of the FOS AU-rich element, binds to a core element of 27 nucleotides that contain AUUUA, AUUUUA, and AUUUUUA motifs. Binds preferentially to the 5'-UUUU[AG]UUU-3' motif in vitro. With ZNF385A, binds the 3'-UTR of p53/TP53 mRNA to control their nuclear export induced by CDKN2A. Hence, may regulate p53/TP53 expression and mediate in part the CDKN2A anti-proliferative activity. May also bind with ZNF385A the CCNB1 mRNA. Increases the stability of the leptin mRNA harboring an AU-rich element (ARE) in its 3' UTR. This is ELAV-like protein 1 (ELAVL1) from Homo sapiens (Human).